Reading from the N-terminus, the 204-residue chain is Holliday junction branch migration complex subunit RuvA (204 aa).

The interval 1-67 is domain I; that stretch reads MIAFLSGHLV…ETELVLYGFG (67 aa). A domain II region spans residues 68–146; sequence SPAERDLFVE…HWRQGMGVAD (79 aa). Positions 147 to 157 are flexible linker; that stretch reads QPLAGGPPMPI. The interval 157 to 204 is domain III; sequence IREEVEMALLALGYSTQEIQAALQALPTHPRPTEDWLRDAITYLSQQP.

It belongs to the RuvA family. Homotetramer. Forms an RuvA(8)-RuvB(12)-Holliday junction (HJ) complex. HJ DNA is sandwiched between 2 RuvA tetramers; dsDNA enters through RuvA and exits via RuvB. An RuvB hexamer assembles on each DNA strand where it exits the tetramer. Each RuvB hexamer is contacted by two RuvA subunits (via domain III) on 2 adjacent RuvB subunits; this complex drives branch migration. In the full resolvosome a probable DNA-RuvA(4)-RuvB(12)-RuvC(2) complex forms which resolves the HJ.

It is found in the cytoplasm. The RuvA-RuvB-RuvC complex processes Holliday junction (HJ) DNA during genetic recombination and DNA repair, while the RuvA-RuvB complex plays an important role in the rescue of blocked DNA replication forks via replication fork reversal (RFR). RuvA specifically binds to HJ cruciform DNA, conferring on it an open structure. The RuvB hexamer acts as an ATP-dependent pump, pulling dsDNA into and through the RuvAB complex. HJ branch migration allows RuvC to scan DNA until it finds its consensus sequence, where it cleaves and resolves the cruciform DNA. The chain is Holliday junction branch migration complex subunit RuvA from Synechococcus sp. (strain JA-2-3B'a(2-13)) (Cyanobacteria bacterium Yellowstone B-Prime).